Consider the following 219-residue polypeptide: Octanoyltransferase (219 aa).

One can recognise a BPL/LPL catalytic domain in the interval 32–207 (ASSPDQLWIV…TFSHNLGYQN (176 aa)). Residues 71–78 (RGGQVTYH), 138–140 (SLG), and 151–153 (GLA) each bind substrate. Residue C169 is the Acyl-thioester intermediate of the active site.

Belongs to the LipB family.

It is found in the cytoplasm. The enzyme catalyses octanoyl-[ACP] + L-lysyl-[protein] = N(6)-octanoyl-L-lysyl-[protein] + holo-[ACP] + H(+). It functions in the pathway protein modification; protein lipoylation via endogenous pathway; protein N(6)-(lipoyl)lysine from octanoyl-[acyl-carrier-protein]: step 1/2. Its function is as follows. Catalyzes the transfer of endogenously produced octanoic acid from octanoyl-acyl-carrier-protein onto the lipoyl domains of lipoate-dependent enzymes. Lipoyl-ACP can also act as a substrate although octanoyl-ACP is likely to be the physiological substrate. This Shewanella sediminis (strain HAW-EB3) protein is Octanoyltransferase.